Reading from the N-terminus, the 736-residue chain is Subtilisin-like protease SBT1.9 (736 aa).

A signal peptide spans 1–20; that stretch reads MGMTVVIILVFSFFVAIVTA. A propeptide spans 21-101 (activation peptide); that stretch reads ETSPYIIHMD…FTKDLPVKLH (81 aa). An Inhibitor I9 domain is found at 25–101; the sequence is YIIHMDLSAK…FTKDLPVKLH (77 aa). The region spanning 103-582 is the Peptidase S8 domain; that stretch reads TFSPKFIGLN…AGHVSTNKVL (480 aa). Asn-112 carries N-linked (GlcNAc...) asparagine glycosylation. The active-site Charge relay system is the Asp-133. An N-linked (GlcNAc...) asparagine glycan is attached at Asn-162. His-205 acts as the Charge relay system in catalysis. N-linked (GlcNAc...) asparagine glycans are attached at residues Asn-220, Asn-381, and Asn-453. The PA domain maps to 367–441; sequence VQFPVTYIES…VAFIGSKHRE (75 aa). Ser-529 functions as the Charge relay system in the catalytic mechanism. An N-linked (GlcNAc...) asparagine glycan is attached at Asn-617.

It belongs to the peptidase S8 family.

The protein resides in the secreted. The polypeptide is Subtilisin-like protease SBT1.9 (Arabidopsis thaliana (Mouse-ear cress)).